The primary structure comprises 147 residues: Large ribosomal subunit protein uL13 (147 aa).

Positions 126-147 are disordered; it reads GGPEHPHAAQNPQPYEITQIAQ.

The protein belongs to the universal ribosomal protein uL13 family. As to quaternary structure, part of the 50S ribosomal subunit.

Functionally, this protein is one of the early assembly proteins of the 50S ribosomal subunit, although it is not seen to bind rRNA by itself. It is important during the early stages of 50S assembly. In Cutibacterium acnes (strain DSM 16379 / KPA171202) (Propionibacterium acnes), this protein is Large ribosomal subunit protein uL13.